The primary structure comprises 151 residues: uncharacterized protein (151 aa).

Residues isoleucine 3–leucine 151 enclose the N-acetyltransferase domain.

Belongs to the acetyltransferase family.

This is an uncharacterized protein from Bacillus subtilis (strain 168).